The chain runs to 729 residues: Fatty acid oxidation complex subunit alpha (729 aa).

The enoyl-CoA hydratase/isomerase stretch occupies residues 1 to 189 (MLYKGDTLYL…KIGLVDGVVK (189 aa)). Asp-296 lines the substrate pocket. The 3-hydroxyacyl-CoA dehydrogenase stretch occupies residues 311–729 (ETPKQAAVLG…ARPVGSLKTA (419 aa)). Residues Met-324, Asp-343, 400-402 (VVE), Lys-407, and Ser-429 each bind NAD(+). The For 3-hydroxyacyl-CoA dehydrogenase activity role is filled by His-450. Asn-453 is a binding site for NAD(+). The substrate site is built by Asn-500 and Tyr-660. The segment at 708 to 729 (RHNEPYYPPVEPARPVGSLKTA) is disordered.

The protein in the N-terminal section; belongs to the enoyl-CoA hydratase/isomerase family. In the C-terminal section; belongs to the 3-hydroxyacyl-CoA dehydrogenase family. Heterotetramer of two alpha chains (FadB) and two beta chains (FadA).

It carries out the reaction a (3S)-3-hydroxyacyl-CoA + NAD(+) = a 3-oxoacyl-CoA + NADH + H(+). The catalysed reaction is a (3S)-3-hydroxyacyl-CoA = a (2E)-enoyl-CoA + H2O. It catalyses the reaction a 4-saturated-(3S)-3-hydroxyacyl-CoA = a (3E)-enoyl-CoA + H2O. The enzyme catalyses (3S)-3-hydroxybutanoyl-CoA = (3R)-3-hydroxybutanoyl-CoA. It carries out the reaction a (3Z)-enoyl-CoA = a 4-saturated (2E)-enoyl-CoA. The catalysed reaction is a (3E)-enoyl-CoA = a 4-saturated (2E)-enoyl-CoA. The protein operates within lipid metabolism; fatty acid beta-oxidation. Its function is as follows. Involved in the aerobic and anaerobic degradation of long-chain fatty acids via beta-oxidation cycle. Catalyzes the formation of 3-oxoacyl-CoA from enoyl-CoA via L-3-hydroxyacyl-CoA. It can also use D-3-hydroxyacyl-CoA and cis-3-enoyl-CoA as substrate. The chain is Fatty acid oxidation complex subunit alpha from Salmonella enteritidis PT4 (strain P125109).